Consider the following 211-residue polypeptide: Imidazole glycerol phosphate synthase subunit HisH (211 aa).

Residues 3-211 (VVAVIDYEMG…VSQVREKIAA (209 aa)) enclose the Glutamine amidotransferase type-1 domain. Catalysis depends on cysteine 81, which acts as the Nucleophile. Catalysis depends on residues histidine 186 and glutamate 188.

As to quaternary structure, heterodimer of HisH and HisF.

The protein localises to the cytoplasm. The catalysed reaction is 5-[(5-phospho-1-deoxy-D-ribulos-1-ylimino)methylamino]-1-(5-phospho-beta-D-ribosyl)imidazole-4-carboxamide + L-glutamine = D-erythro-1-(imidazol-4-yl)glycerol 3-phosphate + 5-amino-1-(5-phospho-beta-D-ribosyl)imidazole-4-carboxamide + L-glutamate + H(+). The enzyme catalyses L-glutamine + H2O = L-glutamate + NH4(+). It functions in the pathway amino-acid biosynthesis; L-histidine biosynthesis; L-histidine from 5-phospho-alpha-D-ribose 1-diphosphate: step 5/9. In terms of biological role, IGPS catalyzes the conversion of PRFAR and glutamine to IGP, AICAR and glutamate. The HisH subunit catalyzes the hydrolysis of glutamine to glutamate and ammonia as part of the synthesis of IGP and AICAR. The resulting ammonia molecule is channeled to the active site of HisF. In Nostoc sp. (strain PCC 7120 / SAG 25.82 / UTEX 2576), this protein is Imidazole glycerol phosphate synthase subunit HisH.